A 42-amino-acid polypeptide reads, in one-letter code: Histone H1B (42 aa).

Residues 1–42 (TYYELIKAAILALKERNGSSAQAIKKYILENNKIEFQQTFLR) enclose the H15 domain.

This sequence belongs to the histone H1/H5 family.

It localises to the nucleus. The protein resides in the chromosome. Histones H1 are necessary for the condensation of nucleosome chains into higher-order structures. This is Histone H1B from Olisthodiscus luteus (Marine phytoflagellate).